The following is a 339-amino-acid chain: Ribosomal RNA small subunit methyltransferase H (339 aa).

Residues 56 to 58 (GGH), aspartate 76, phenylalanine 102, aspartate 123, and glutamine 130 each bind S-adenosyl-L-methionine. Disordered stretches follow at residues 274–309 (RHSR…KAEV) and 320–339 (LRVA…PQHS). Over residues 325-339 (RTDTPYNTDPSPQHS) the composition is skewed to polar residues.

It belongs to the methyltransferase superfamily. RsmH family.

It localises to the cytoplasm. The enzyme catalyses cytidine(1402) in 16S rRNA + S-adenosyl-L-methionine = N(4)-methylcytidine(1402) in 16S rRNA + S-adenosyl-L-homocysteine + H(+). Functionally, specifically methylates the N4 position of cytidine in position 1402 (C1402) of 16S rRNA. The polypeptide is Ribosomal RNA small subunit methyltransferase H (Psychrobacter sp. (strain PRwf-1)).